A 586-amino-acid chain; its full sequence is Aspartate--tRNA ligase (586 aa).

L-aspartate is bound at residue glutamate 171. Positions 195 to 198 (QLFK) are aspartate. Arginine 217 contacts L-aspartate. ATP-binding positions include 217–219 (RDE) and glutamine 226. L-aspartate is bound at residue histidine 448. Glutamate 482 lines the ATP pocket. Residue arginine 489 participates in L-aspartate binding. 534–537 (GLDR) contacts ATP.

It belongs to the class-II aminoacyl-tRNA synthetase family. Type 1 subfamily. Homodimer.

It is found in the cytoplasm. It carries out the reaction tRNA(Asp) + L-aspartate + ATP = L-aspartyl-tRNA(Asp) + AMP + diphosphate. Functionally, catalyzes the attachment of L-aspartate to tRNA(Asp) in a two-step reaction: L-aspartate is first activated by ATP to form Asp-AMP and then transferred to the acceptor end of tRNA(Asp). In Buchnera aphidicola subsp. Acyrthosiphon pisum (strain 5A), this protein is Aspartate--tRNA ligase.